Consider the following 362-residue polypeptide: Ferrochelatase (362 aa).

The Fe cation site is built by His-228 and Glu-309.

This sequence belongs to the ferrochelatase family.

The protein resides in the cytoplasm. The enzyme catalyses heme b + 2 H(+) = protoporphyrin IX + Fe(2+). The protein operates within porphyrin-containing compound metabolism; protoheme biosynthesis; protoheme from protoporphyrin-IX: step 1/1. Functionally, catalyzes the ferrous insertion into protoporphyrin IX. This Bordetella parapertussis (strain 12822 / ATCC BAA-587 / NCTC 13253) protein is Ferrochelatase.